Here is a 420-residue protein sequence, read N- to C-terminus: Methylaspartate ammonia-lyase 1 (420 aa).

A (2S,3S)-3-methyl-L-aspartate-binding site is contributed by glutamine 173. Positions 237, 272, and 306 each coordinate Mg(2+). Glutamine 328 contributes to the (2S,3S)-3-methyl-L-aspartate binding site. The Proton acceptor role is filled by lysine 330. Position 359 to 360 (359 to 360) interacts with (2S,3S)-3-methyl-L-aspartate; it reads SC.

As to quaternary structure, homodimer. It depends on Mg(2+) as a cofactor.

The catalysed reaction is (2S,3S)-3-methyl-L-aspartate = mesaconate + NH4(+). Its pathway is amino-acid degradation; L-glutamate degradation via mesaconate pathway; acetate and pyruvate from L-glutamate: step 2/4. Involved in the methylaspartate cycle. Catalyzes the formation of the alpha,beta-unsaturated bond by the reversible anti elimination of ammonia from L-threo-beta-methylaspartate (L-threo-(2S,3S)-3-methylaspartate) to give mesaconate. It can also catalyze the amination of fumarate and ethylfumarate, and the deamination of hydroxylamine, hydrazine, methylamine and ethylamine. This Carboxydothermus hydrogenoformans (strain ATCC BAA-161 / DSM 6008 / Z-2901) protein is Methylaspartate ammonia-lyase 1.